Reading from the N-terminus, the 251-residue chain is uncharacterized protein (251 aa).

The protein belongs to the FAM243 family.

This is an uncharacterized protein from Bos taurus (Bovine).